Reading from the N-terminus, the 1072-residue chain is DNA-directed RNA polymerase subunit beta (1072 aa).

It belongs to the RNA polymerase beta chain family. In plastids the minimal PEP RNA polymerase catalytic core is composed of four subunits: alpha, beta, beta', and beta''. When a (nuclear-encoded) sigma factor is associated with the core the holoenzyme is formed, which can initiate transcription.

The protein localises to the plastid. It is found in the chloroplast. The catalysed reaction is RNA(n) + a ribonucleoside 5'-triphosphate = RNA(n+1) + diphosphate. DNA-dependent RNA polymerase catalyzes the transcription of DNA into RNA using the four ribonucleoside triphosphates as substrates. This is DNA-directed RNA polymerase subunit beta from Capsella bursa-pastoris (Shepherd's purse).